The chain runs to 4069 residues: Cardiomyopathy-associated protein 5 (4069 aa).

Disordered regions lie at residues 1–177, 341–387, 442–525, 538–558, 597–705, 732–793, 844–872, 890–948, 979–1009, 1041–1097, 1160–1179, 1205–1237, 1540–1575, 1594–1742, 1757–1809, 1892–1988, 2064–2175, 2187–2259, 2385–2412, 2425–2463, 2494–2527, 2653–2706, and 2750–2862; these read MASR…SQVL, TVPS…DTPA, GLAA…EDSN, ESPL…VEHK, EYSV…VPSL, PSEE…RFTP, SSPD…APPL, LERY…FSPD, TSPS…VSIP, ADEE…PEIP, VKEE…SVPA, RKEE…PESE, KETE…ELEN, PAVE…EEFQ, HPAD…ITEP, ENWM…VKLA, TISS…KKGI, FGSS…SGDG, PQQP…SIIL, SEDR…LENR, TQIT…NERP, QEGN…VGTQ, and SSRD…SDVP. Positions 27-47 are enriched in acidic residues; that stretch reads ETEEESEGEEDETAAESEEEP. Over residues 48–62 the composition is skewed to basic and acidic residues; that stretch reads DSRLSDQDEEGKIKQ. Polar residues predominate over residues 84 to 119; sequence TWETNSSRSSTPWASEESQTSGVCSREGSTVNSPPG. The segment covering 130–153 has biased composition (basic residues); it reads KVRKRTHKSKHGSPSLRRKGNRKR. S155 carries the phosphoserine modification. Polar residues-rich tracts occupy residues 156 to 177 and 341 to 350; these read FESQ…SQVL and TVPSYSSSGR. The segment covering 489-499 has biased composition (low complexity); the sequence is LEPSISLSEPL. Positions 500 to 510 are enriched in acidic residues; sequence MLEEPEKEEIE. Phosphoserine is present on S631. Residues 640–659 are compositionally biased toward low complexity; it reads AYSPAAAPTSESSLSPSTTE. Polar residues-rich tracts occupy residues 664-673, 692-701, and 752-775; these read NQSPLFSTVT, PDSTSASEYS, and PSLS…TATS. Positions 1049–1063 are enriched in polar residues; sequence TAATPVSEQFSSSQK. Basic and acidic residues predominate over residues 1085–1094; sequence DKSEKAEIKP. Polar residues predominate over residues 1214-1223; sequence QEATAHVSQD. Positions 1621–1630 are enriched in basic and acidic residues; it reads EPEKKDKPHQ. Positions 1639 to 1662 are enriched in polar residues; the sequence is SEFSSDLGRQSGSIGTKQAKSPIT. 3 stretches are compositionally biased toward basic and acidic residues: residues 1668-1687, 1704-1714, and 1786-1795; these read VLEK…ENRE, LREESQNEEIK, and ILDKLSEETG. Polar residues predominate over residues 1796-1808; the sequence is HPNSSQVLQSITE. A compositionally biased stretch (basic and acidic residues) spans 1935–1955; the sequence is SKDHTCEVRKQVLPHSAEESH. Residues 1956-1980 show a composition bias toward polar residues; that stretch reads LSSQEAVSALDTSSGNTETLSSKSY. Residues 2085–2124 are compositionally biased toward basic and acidic residues; that stretch reads NEKEAHRSTPPFPEEKPLEESKMVQSKVIDDADEGKKPSP. Positions 2145 to 2155 are enriched in polar residues; sequence SPESPEVTQNP. Basic and acidic residues-rich tracts occupy residues 2162–2172 and 2232–2250; these read AKPDLPEEKGK and KPAD…DEPR. Residues 2387 to 2399 show a composition bias toward polar residues; that stretch reads QPKSASSNFASKN. S2404 is modified (phosphoserine). Basic and acidic residues predominate over residues 2441–2461; that stretch reads ISEEETKLRSVSPTEKKDNLE. 3 stretches are compositionally biased toward basic and acidic residues: residues 2661–2681, 2750–2769, and 2777–2804; these read KSSR…ESEL, SSRD…ESEL, and ITKE…ETKS. S2813 is subject to Phosphoserine. Residues 2830–2847 are compositionally biased toward basic and acidic residues; sequence AVKKKEMPRSELTPERHT. Positions 2964 to 2988 form a coiled coil; sequence SIDQEESEQMQDKLEYLEEKASFKT. Positions 3015–3031 are enriched in basic and acidic residues; the sequence is PLKENKQKETHKTKEEI. Disordered regions lie at residues 3015–3037, 3119–3156, 3204–3231, 3386–3421, and 3465–3495; these read PLKE…DSET, EKGH…PGMP, KKKE…SDTD, SGAT…QDEY, and EFAS…SSEV. The tract at residues 3052 to 3365 is required for RYR2 clustering; that stretch reads YFEKYTLIDY…GSHGNEVGNA (314 aa). Residues 3128 to 3138 are compositionally biased toward polar residues; the sequence is PETQSQNSADR. The span at 3139-3150 shows a compositional bias: basic and acidic residues; it reads NVSKDTKRDVDS. Residues 3213-3227 are compositionally biased toward polar residues; sequence EGDSVNSEASFPSRN. Position 3228 is a phosphoserine (S3228). Over residues 3477–3489 the composition is skewed to basic and acidic residues; that stretch reads EQKELGSERKEED. The tract at residues 3517–3544 is amphipathic helix H1; sequence KCPISATDKVFGTHKDHEVSTLDTAISA. The stretch at 3544 to 3653 forms a coiled coil; sequence AVKVQLAEFL…REAEELDEAV (110 aa). The tract at residues 3545–3672 is B-box coiled-coil; BBC; the sequence is VKVQLAEFLE…ERLLSAMEST (128 aa). The amphipathic helix H2 stretch occupies residues 3631 to 3648; sequence SMDTAKDTLETIVREAEE. Fibronectin type-III domains follow at residues 3704 to 3805 and 3806 to 3898; these read VPQP…TAPS and TPVI…TRGT. The interval 3751 to 3767 is amphipathic helix H3; it reads EVNELVEEYRLTVKESY. Residues 3880 to 4065 enclose the B30.2/SPRY domain; sequence NAFGTSEQSE…LHLGIEPPDS (186 aa).

In terms of assembly, interacts with PRKAR2A. Interacts with ACTN2 and DTNBP1/dysbindin. Interacts with DES. Interacts with DMD/dystrophin. Interacts with the calcineurin catalytic subunit PPP3CA. Interacts with TTN. Interacts with CAPN3; this interaction, which results in CMYA5 proteolysis, may protect CAPN3 from autolysis. Interacts with FSD2. Identified in a complex composed of FSD2, CMYA5 and RYR2. Phosphorylated by PKA. As to expression, expressed in skeletal muscle; at a strong level and in heart.

The protein localises to the nucleus. It is found in the sarcoplasmic reticulum. Its subcellular location is the cytoplasm. The protein resides in the perinuclear region. It localises to the myofibril. The protein localises to the sarcomere. It is found in the m line. Functionally, may serve as an anchoring protein that mediates the subcellular compartmentation of protein kinase A (PKA) via binding to PRKAR2A. May function as a repressor of calcineurin-mediated transcriptional activity. May attenuate calcineurin ability to induce slow-fiber gene program in muscle and may negatively modulate skeletal muscle regeneration. Plays a role in the assembly of ryanodine receptor (RYR2) clusters in striated muscle. The polypeptide is Cardiomyopathy-associated protein 5 (CMYA5) (Homo sapiens (Human)).